The sequence spans 663 residues: UvrABC system protein B (663 aa).

Residues 1-10 are compositionally biased toward basic and acidic residues; it reads MIDKRDDKPF. Residues 1-23 are disordered; it reads MIDKRDDKPFKLKSKYKPSGDQP. The region spanning 31–418 is the Helicase ATP-binding domain; that stretch reads DNIEGGEKAQ…TNTIIEQIIR (388 aa). 44–51 provides a ligand contact to ATP; the sequence is GATGTGKT. A Beta-hairpin motif is present at residues 97 to 120; that stretch reads YYDYYQPEAYVPSSDTYIEKDSSV. In terms of domain architecture, Helicase C-terminal spans 435 to 601; sequence QMDDLLGEIN…TIKKDIRGLI (167 aa). Positions 627-662 constitute a UVR domain; it reads KEAINALQKQMQEAAELLDFELAAQMRDLILELKLM.

It belongs to the UvrB family. Forms a heterotetramer with UvrA during the search for lesions. Interacts with UvrC in an incision complex.

The protein resides in the cytoplasm. In terms of biological role, the UvrABC repair system catalyzes the recognition and processing of DNA lesions. A damage recognition complex composed of 2 UvrA and 2 UvrB subunits scans DNA for abnormalities. Upon binding of the UvrA(2)B(2) complex to a putative damaged site, the DNA wraps around one UvrB monomer. DNA wrap is dependent on ATP binding by UvrB and probably causes local melting of the DNA helix, facilitating insertion of UvrB beta-hairpin between the DNA strands. Then UvrB probes one DNA strand for the presence of a lesion. If a lesion is found the UvrA subunits dissociate and the UvrB-DNA preincision complex is formed. This complex is subsequently bound by UvrC and the second UvrB is released. If no lesion is found, the DNA wraps around the other UvrB subunit that will check the other stand for damage. This is UvrABC system protein B from Streptococcus pyogenes serotype M1.